Consider the following 362-residue polypeptide: UDP-N-acetylglucosamine--N-acetylmuramyl-(pentapeptide) pyrophosphoryl-undecaprenol N-acetylglucosamine transferase (362 aa).

UDP-N-acetyl-alpha-D-glucosamine is bound by residues 15 to 17 (TGG), Asn127, Arg165, Ser191, Ile247, 266 to 271 (ALTVSE), and Gln292.

This sequence belongs to the glycosyltransferase 28 family. MurG subfamily.

The protein localises to the cell inner membrane. The catalysed reaction is di-trans,octa-cis-undecaprenyl diphospho-N-acetyl-alpha-D-muramoyl-L-alanyl-D-glutamyl-meso-2,6-diaminopimeloyl-D-alanyl-D-alanine + UDP-N-acetyl-alpha-D-glucosamine = di-trans,octa-cis-undecaprenyl diphospho-[N-acetyl-alpha-D-glucosaminyl-(1-&gt;4)]-N-acetyl-alpha-D-muramoyl-L-alanyl-D-glutamyl-meso-2,6-diaminopimeloyl-D-alanyl-D-alanine + UDP + H(+). It functions in the pathway cell wall biogenesis; peptidoglycan biosynthesis. Functionally, cell wall formation. Catalyzes the transfer of a GlcNAc subunit on undecaprenyl-pyrophosphoryl-MurNAc-pentapeptide (lipid intermediate I) to form undecaprenyl-pyrophosphoryl-MurNAc-(pentapeptide)GlcNAc (lipid intermediate II). This chain is UDP-N-acetylglucosamine--N-acetylmuramyl-(pentapeptide) pyrophosphoryl-undecaprenol N-acetylglucosamine transferase, found in Shewanella putrefaciens (strain CN-32 / ATCC BAA-453).